A 226-amino-acid polypeptide reads, in one-letter code: V-type proton ATPase subunit E 1 (226 aa).

The residue at position 2 (alanine 2) is an N-acetylalanine. Phosphotyrosine is present on tyrosine 56.

It belongs to the V-ATPase E subunit family. As to quaternary structure, V-ATPase is a heteromultimeric enzyme made up of two complexes: the ATP-hydrolytic V1 complex and the proton translocation V0 complex. The V1 complex consists of three catalytic AB heterodimers that form a heterohexamer, three peripheral stalks each consisting of EG heterodimers, one central rotor including subunits D and F, and the regulatory subunits C and H. The proton translocation complex V0 consists of the proton transport subunit a, a ring of proteolipid subunits c9c'', rotary subunit d, subunits e and f, and the accessory subunits ATP6AP1/Ac45 and ATP6AP2/PRR. Interacts with RABL2/RABL2A; binds preferentially to GTP-bound RABL2. Interacts with ALDOC. Interacts with RAB11B. In terms of tissue distribution, kidney; localizes to early distal nephron, encompassing thick ascending limbs and distal convoluted tubules (at protein level). Ubiquitous. High expression in the skin.

It is found in the apical cell membrane. The protein resides in the cytoplasmic vesicle. It localises to the secretory vesicle. The protein localises to the synaptic vesicle membrane. Its subcellular location is the clathrin-coated vesicle membrane. In terms of biological role, subunit of the V1 complex of vacuolar(H+)-ATPase (V-ATPase), a multisubunit enzyme composed of a peripheral complex (V1) that hydrolyzes ATP and a membrane integral complex (V0) that translocates protons. V-ATPase is responsible for acidifying and maintaining the pH of intracellular compartments and in some cell types, is targeted to the plasma membrane, where it is responsible for acidifying the extracellular environment. The protein is V-type proton ATPase subunit E 1 (ATP6V1E1) of Homo sapiens (Human).